Reading from the N-terminus, the 388-residue chain is Succinate--CoA ligase [ADP-forming] subunit beta (388 aa).

The ATP-grasp domain occupies 9–244; that stretch reads KQLFKEYGLP…PSQEDAREAH (236 aa). ATP-binding positions include Lys-46, 53–55, Glu-99, Thr-102, and Glu-107; that span reads GRG. 2 residues coordinate Mg(2+): Asn-199 and Asp-213. Substrate-binding positions include Asn-264 and 321 to 323; that span reads GIV.

It belongs to the succinate/malate CoA ligase beta subunit family. As to quaternary structure, heterotetramer of two alpha and two beta subunits. Mg(2+) serves as cofactor.

The catalysed reaction is succinate + ATP + CoA = succinyl-CoA + ADP + phosphate. The enzyme catalyses GTP + succinate + CoA = succinyl-CoA + GDP + phosphate. Its pathway is carbohydrate metabolism; tricarboxylic acid cycle; succinate from succinyl-CoA (ligase route): step 1/1. Functionally, succinyl-CoA synthetase functions in the citric acid cycle (TCA), coupling the hydrolysis of succinyl-CoA to the synthesis of either ATP or GTP and thus represents the only step of substrate-level phosphorylation in the TCA. The beta subunit provides nucleotide specificity of the enzyme and binds the substrate succinate, while the binding sites for coenzyme A and phosphate are found in the alpha subunit. This is Succinate--CoA ligase [ADP-forming] subunit beta from Alteromonas mediterranea (strain DSM 17117 / CIP 110805 / LMG 28347 / Deep ecotype).